The chain runs to 485 residues: NADH-quinone oxidoreductase subunit N (485 aa).

14 helical membrane passes run Leu8–Ile28, Phe35–Val55, Phe75–Leu95, Phe105–Leu125, Ser127–Phe147, Tyr159–Ala179, Leu203–Phe223, Pro235–Met255, Ile271–Gln291, Leu297–Gln317, Val326–Leu346, Ala374–Gly394, Leu407–Leu426, and Ala449–Leu469.

It belongs to the complex I subunit 2 family. As to quaternary structure, NDH-1 is composed of 13 different subunits. Subunits NuoA, H, J, K, L, M, N constitute the membrane sector of the complex.

It is found in the cell inner membrane. The catalysed reaction is a quinone + NADH + 5 H(+)(in) = a quinol + NAD(+) + 4 H(+)(out). In terms of biological role, NDH-1 shuttles electrons from NADH, via FMN and iron-sulfur (Fe-S) centers, to quinones in the respiratory chain. The immediate electron acceptor for the enzyme in this species is believed to be ubiquinone. Couples the redox reaction to proton translocation (for every two electrons transferred, four hydrogen ions are translocated across the cytoplasmic membrane), and thus conserves the redox energy in a proton gradient. This Pectobacterium carotovorum subsp. carotovorum (strain PC1) protein is NADH-quinone oxidoreductase subunit N.